A 142-amino-acid chain; its full sequence is Protein archease (142 aa).

Asp12, Asp141, and Ile142 together coordinate Ca(2+).

Belongs to the archease family.

In terms of biological role, activates the tRNA-splicing ligase complex by facilitating the enzymatic turnover of catalytic subunit RtcB. Acts by promoting the guanylylation of RtcB, a key intermediate step in tRNA ligation. Can also alter the NTP specificity of RtcB such that ATP, dGTP or ITP is used efficiently. The polypeptide is Protein archease (Pyrococcus furiosus (strain ATCC 43587 / DSM 3638 / JCM 8422 / Vc1)).